The primary structure comprises 203 residues: Ras-like protein family member 10B (203 aa).

A small GTPase-like region spans residues 1–203 (MVSTYRVAVL…ALRRNRCAIM (203 aa)). 11–18 (GARGVGKS) contributes to the GTP binding site. Positions 33–42 (CVPTTARRLY) match the Effector region motif. GTP is bound by residues 59–62 (DFPP) and 128–131 (NKRD). Cys200 is modified (cysteine methyl ester). Cys200 carries the S-geranylgeranyl cysteine lipid modification. Residues 201–203 (AIM) constitute a propeptide, removed in mature form.

The protein belongs to the small GTPase superfamily. Ras family. As to quaternary structure, interacts with CADPS. In terms of tissue distribution, expressed at high levels in skeletal muscle and, at much lower levels, in heart, brain and pancreas.

The protein localises to the cell membrane. The catalysed reaction is GTP + H2O = GDP + phosphate + H(+). Its function is as follows. May facilitate the release of atrial natriuretic peptide by cardiomyocytes and hence play a role in the regulation of arterial pressure. The sequence is that of Ras-like protein family member 10B (RASL10B) from Homo sapiens (Human).